A 116-amino-acid chain; its full sequence is Omega-ctenitoxin-Pn3a (116 aa).

An N-terminal signal peptide occupies residues 1 to 19 (MKMKLLGIILLVSFPFVLG). Positions 20-38 (FAGIPIEEGENSVEVGEVE) are excised as a propeptide. Cystine bridges form between Cys-41–Cys-58, Cys-48–Cys-64, Cys-55–Cys-90, Cys-57–Cys-78, Cys-66–Cys-76, Cys-96–Cys-102, and Cys-106–Cys-111. His-115 is subject to Histidine amide.

Belongs to the neurotoxin 04 (omega-agtx) family. 03 (type II/III omega-agtx) subfamily. In terms of tissue distribution, expressed by the venom gland.

The protein resides in the secreted. In terms of biological role, this toxin is a potent and practically irreversible antagonist of both Cav2.1/CACNA1A and Cav2.2/CACNA1B calcium channels, while it displays a partial and rapidly reversible block of Cav2.3/CACNA1E calcium channels and no effect on Cav3/CACNA1 calcium channels. Inhibits glutamate uptake from rat brain synaptosomes by an interaction between cysteines from both glutamate transporter and toxin. Blocks potassium-induced exocytosis of synaptic vesicles in brain cortical synaptosomes (IC(50)=1.1 nM). In rat brain, inhibits glutamate release, neuronal death and loss of neurotransmission in the hippocampus resulting from ischemia. In vivo, induces rapid general flaccid paralysis followed by death in 10-30 minutes at dose levels of 5 ug per mouse. The chain is Omega-ctenitoxin-Pn3a from Phoneutria nigriventer (Brazilian armed spider).